The sequence spans 118 residues: Aspartate 1-decarboxylase (118 aa).

Residue serine 25 is the Schiff-base intermediate with substrate; via pyruvic acid of the active site. Position 25 is a pyruvic acid (Ser) (serine 25). Threonine 57 serves as a coordination point for substrate. The active-site Proton donor is the tyrosine 58. Residue glycine 73–alanine 75 coordinates substrate.

This sequence belongs to the PanD family. In terms of assembly, heterooctamer of four alpha and four beta subunits. The cofactor is pyruvate. Is synthesized initially as an inactive proenzyme, which is activated by self-cleavage at a specific serine bond to produce a beta-subunit with a hydroxyl group at its C-terminus and an alpha-subunit with a pyruvoyl group at its N-terminus.

Its subcellular location is the cytoplasm. The catalysed reaction is L-aspartate + H(+) = beta-alanine + CO2. Its pathway is cofactor biosynthesis; (R)-pantothenate biosynthesis; beta-alanine from L-aspartate: step 1/1. Catalyzes the pyruvoyl-dependent decarboxylation of aspartate to produce beta-alanine. This chain is Aspartate 1-decarboxylase, found in Syntrophomonas wolfei subsp. wolfei (strain DSM 2245B / Goettingen).